A 357-amino-acid polypeptide reads, in one-letter code: Peptide chain release factor 1 (357 aa).

At glutamine 234 the chain carries N5-methylglutamine.

This sequence belongs to the prokaryotic/mitochondrial release factor family. Methylated by PrmC. Methylation increases the termination efficiency of RF1.

Its subcellular location is the cytoplasm. In terms of biological role, peptide chain release factor 1 directs the termination of translation in response to the peptide chain termination codons UAG and UAA. The polypeptide is Peptide chain release factor 1 (Frankia casuarinae (strain DSM 45818 / CECT 9043 / HFP020203 / CcI3)).